The following is a 543-amino-acid chain: Probable E3 ubiquitin-protein ligase ARI9 (543 aa).

Positions 1–26 (MDFSDDDMIDNKSGEENYSYGGGNES) are disordered. The tract at residues 124 to 332 (VNIQCGICFE…RHSGACNRFV (209 aa)) is TRIAD supradomain. Zn(2+) is bound by residues cysteine 128, cysteine 131, cysteine 145, histidine 147, cysteine 150, cysteine 153, cysteine 173, cysteine 178, cysteine 217, cysteine 222, cysteine 240, cysteine 242, cysteine 247, cysteine 250, histidine 255, cysteine 260, cysteine 287, and cysteine 290. The segment at 128 to 178 (CGICFESYTREEIARVSCGHPYCKTCWAGYITTKIEDGPGCLRVKCPEPSC) adopts an RING-type 1 zinc-finger fold. The IBR-type zinc-finger motif lies at 197–260 (EKYSRYILRS…SEDAHSPVDC (64 aa)). An RING-type 2; atypical zinc finger spans residues 287–317 (CPECKRPIEKNDGCNHMTCSAPCGHEFCWIC). The active site involves cysteine 300. Zn(2+)-binding residues include cysteine 305, cysteine 309, cysteine 314, cysteine 317, histidine 324, and cysteine 328.

The protein belongs to the RBR family. Ariadne subfamily. It depends on Zn(2+) as a cofactor.

It carries out the reaction [E2 ubiquitin-conjugating enzyme]-S-ubiquitinyl-L-cysteine + [acceptor protein]-L-lysine = [E2 ubiquitin-conjugating enzyme]-L-cysteine + [acceptor protein]-N(6)-ubiquitinyl-L-lysine.. Its pathway is protein modification; protein ubiquitination. Its function is as follows. Might act as an E3 ubiquitin-protein ligase, or as part of E3 complex, which accepts ubiquitin from specific E2 ubiquitin-conjugating enzymes and then transfers it to substrates. The chain is Probable E3 ubiquitin-protein ligase ARI9 (ARI9) from Arabidopsis thaliana (Mouse-ear cress).